The primary structure comprises 684 residues: NAD(P)H-quinone oxidoreductase subunit 5, chloroplastic (684 aa).

14 helical membrane-spanning segments follow: residues 16–36 (WAFP…XLSI), 65–85 (IDPL…MVLI), 96–116 (GYLI…GLVT), 123–143 (IYIF…FWFT), 161–181 (GDFG…SFEF), 206–226 (AALL…HVWL), 234–254 (TPIS…FLVA), 256–276 (LLPL…IGII), 303–323 (LXYM…FHLI), 330–350 (ALLF…VGYS), 372–392 (TSFL…CFWS), 401–421 (WLYS…TAFY), 524–544 (LFPL…GIPF), and 583–603 (IFSV…YKPI).

Belongs to the complex I subunit 5 family. As to quaternary structure, NDH is composed of at least 16 different subunits, 5 of which are encoded in the nucleus.

It localises to the plastid. The protein resides in the chloroplast thylakoid membrane. The enzyme catalyses a plastoquinone + NADH + (n+1) H(+)(in) = a plastoquinol + NAD(+) + n H(+)(out). It carries out the reaction a plastoquinone + NADPH + (n+1) H(+)(in) = a plastoquinol + NADP(+) + n H(+)(out). In terms of biological role, NDH shuttles electrons from NAD(P)H:plastoquinone, via FMN and iron-sulfur (Fe-S) centers, to quinones in the photosynthetic chain and possibly in a chloroplast respiratory chain. The immediate electron acceptor for the enzyme in this species is believed to be plastoquinone. Couples the redox reaction to proton translocation, and thus conserves the redox energy in a proton gradient. In Sesamum indicum (Oriental sesame), this protein is NAD(P)H-quinone oxidoreductase subunit 5, chloroplastic (ndhF).